We begin with the raw amino-acid sequence, 266 residues long: MRLIPLTTAEQVGKWAARHIVNRINAFKPTANRPFVLGLPTGGTPMTTYKALVEMHKAGQVSFKHVITFNMDEYVGLPKEHPESYYSFMHRNFFDHVDIPAENINLLNGNALDIDAECRQYEEKIRSYGKIHLFMGGVGNDGHIAFNEPASSLASRTRIKTLTHDTRVANSRFFDNDVNQVPKYALTVGVGTLLDAEEVMILVLGSQKALALQAAVEGCVNHMWTISCLQLHPKAIMVCDEPSTMELKVKTLRYFNELEAENIKGL.

Asp72 acts as the Proton acceptor; for enolization step in catalysis. Catalysis depends on Asp141, which acts as the For ring-opening step. The Proton acceptor; for ring-opening step role is filled by His143. Glu148 functions as the For ring-opening step in the catalytic mechanism.

It belongs to the glucosamine/galactosamine-6-phosphate isomerase family. NagB subfamily. In terms of assembly, homohexamer; trimer of disulfide-linked dimers.

The catalysed reaction is alpha-D-glucosamine 6-phosphate + H2O = beta-D-fructose 6-phosphate + NH4(+). Its pathway is amino-sugar metabolism; N-acetylneuraminate degradation; D-fructose 6-phosphate from N-acetylneuraminate: step 5/5. Its activity is regulated as follows. Allosterically activated by N-acetylglucosamine 6-phosphate (GlcNAc6P). In terms of biological role, catalyzes the reversible isomerization-deamination of glucosamine 6-phosphate (GlcN6P) to form fructose 6-phosphate (Fru6P) and ammonium ion. In Shigella dysenteriae serotype 1 (strain Sd197), this protein is Glucosamine-6-phosphate deaminase.